Consider the following 323-residue polypeptide: Phospho-N-acetylmuramoyl-pentapeptide-transferase (323 aa).

9 helical membrane passes run 3–23, 52–72, 77–97, 121–141, 145–165, 175–195, 200–220, 226–248, and 301–321; these read NILL…PALI, MGGL…SWVL, MLPT…LGMW, IVGA…MALH, IGNW…LVGF, LDGL…IVAW, INIA…LIFN, IFMG…ILLH, and IDLT…WVIL.

Belongs to the glycosyltransferase 4 family. MraY subfamily. It depends on Mg(2+) as a cofactor.

It is found in the cell membrane. The enzyme catalyses UDP-N-acetyl-alpha-D-muramoyl-L-alanyl-gamma-D-glutamyl-L-lysyl-D-alanyl-D-alanine + di-trans,octa-cis-undecaprenyl phosphate = Mur2Ac(oyl-L-Ala-gamma-D-Glu-L-Lys-D-Ala-D-Ala)-di-trans,octa-cis-undecaprenyl diphosphate + UMP. The protein operates within cell wall biogenesis; peptidoglycan biosynthesis. Its function is as follows. Catalyzes the initial step of the lipid cycle reactions in the biosynthesis of the cell wall peptidoglycan: transfers peptidoglycan precursor phospho-MurNAc-pentapeptide from UDP-MurNAc-pentapeptide onto the lipid carrier undecaprenyl phosphate, yielding undecaprenyl-pyrophosphoryl-MurNAc-pentapeptide, known as lipid I. The polypeptide is Phospho-N-acetylmuramoyl-pentapeptide-transferase (Levilactobacillus brevis (strain ATCC 367 / BCRC 12310 / CIP 105137 / JCM 1170 / LMG 11437 / NCIMB 947 / NCTC 947) (Lactobacillus brevis)).